Consider the following 327-residue polypeptide: Undecaprenyl-phosphate 4-deoxy-4-formamido-L-arabinose transferase (327 aa).

At 1-235 (MFDAAPIKKV…TCLTTTPLRL (235 aa)) the chain is on the cytoplasmic side. A helical transmembrane segment spans residues 236–256 (LSLLGSVIAIGGFSLSVLLIV). Topologically, residues 257 to 269 (LRLALGPQWAAEG) are periplasmic. The helical transmembrane segment at 270–290 (VFMLFAVLFTFIGAQFIGMGL) threads the bilayer. Residues 291 to 327 (LGEYIGRIYNDVRARPRYFVQQVIYPESTPFTEESHQ) lie on the Cytoplasmic side of the membrane.

The protein belongs to the glycosyltransferase 2 family.

Its subcellular location is the cell inner membrane. The catalysed reaction is UDP-4-deoxy-4-formamido-beta-L-arabinose + di-trans,octa-cis-undecaprenyl phosphate = 4-deoxy-4-formamido-alpha-L-arabinopyranosyl di-trans,octa-cis-undecaprenyl phosphate + UDP. It functions in the pathway glycolipid biosynthesis; 4-amino-4-deoxy-alpha-L-arabinose undecaprenyl phosphate biosynthesis; 4-amino-4-deoxy-alpha-L-arabinose undecaprenyl phosphate from UDP-4-deoxy-4-formamido-beta-L-arabinose and undecaprenyl phosphate: step 1/2. It participates in bacterial outer membrane biogenesis; lipopolysaccharide biosynthesis. Its function is as follows. Catalyzes the transfer of 4-deoxy-4-formamido-L-arabinose from UDP to undecaprenyl phosphate. The modified arabinose is attached to lipid A and is required for resistance to polymyxin and cationic antimicrobial peptides. The chain is Undecaprenyl-phosphate 4-deoxy-4-formamido-L-arabinose transferase from Salmonella choleraesuis (strain SC-B67).